Consider the following 318-residue polypeptide: MVFFPHRHLIGIKGLTEQDITYLLDKADEAVKISRQREKKTSTLRGLTQINLFFEASTRTQASFELAGKRLGADVMNMSVGNSSVKKGETLIDTAMTLNAMRPDVLVIRHSSAGAAALLAQKVSCSVVNAGDGQHEHPTQALLDALTIRRAKGKLSRIIVAICGDVLHSRVARSNILLLNAMGARVRVVAPATLLPSGIAEMGVEVFHSMQEGLKDADVVMMLRLQRERMSGAFVPSVREYYHFYGLDAETLKAAKEDTLVMHPGPMNRGVEIASEVADGPQSVIAEQVEMGVAVRMAVMETLLVSQNQGPRTDGMKA.

Carbamoyl phosphate is bound by residues Arg-59 and Thr-60. Lys-87 serves as a coordination point for L-aspartate. 3 residues coordinate carbamoyl phosphate: Arg-109, His-137, and Gln-140. The L-aspartate site is built by Arg-170 and Arg-224. Carbamoyl phosphate-binding residues include Gly-265 and Pro-266.

It belongs to the aspartate/ornithine carbamoyltransferase superfamily. ATCase family. In terms of assembly, heterododecamer (2C3:3R2) of six catalytic PyrB chains organized as two trimers (C3), and six regulatory PyrI chains organized as three dimers (R2).

It catalyses the reaction carbamoyl phosphate + L-aspartate = N-carbamoyl-L-aspartate + phosphate + H(+). It participates in pyrimidine metabolism; UMP biosynthesis via de novo pathway; (S)-dihydroorotate from bicarbonate: step 2/3. In terms of biological role, catalyzes the condensation of carbamoyl phosphate and aspartate to form carbamoyl aspartate and inorganic phosphate, the committed step in the de novo pyrimidine nucleotide biosynthesis pathway. The sequence is that of Aspartate carbamoyltransferase catalytic subunit from Rhizobium etli (strain CIAT 652).